Here is a 209-residue protein sequence, read N- to C-terminus: MSGKKRTASSSRWMQEHFDDHYVKLAQKRGFRSRAAFKIEEIQEKDKLIRPGMTVVDLGAAPGGWSQVAVKLAGDNGKVIACDILPMDPIVGVDFLQGDFREEKVLDALLTRVGDAKVDVVLSDMAPNMSGTGGVDQPRAMYLVELALDMCHQVLAPNGCFAVKVFQGEGFEEYMKSVREAFKTVKTRKPDSSRPRSREVYLVATGYKL.

Gly63, Trp65, Asp83, Asp99, and Asp124 together coordinate S-adenosyl-L-methionine. Lys164 acts as the Proton acceptor in catalysis.

The protein belongs to the class I-like SAM-binding methyltransferase superfamily. RNA methyltransferase RlmE family.

The protein resides in the cytoplasm. The enzyme catalyses uridine(2552) in 23S rRNA + S-adenosyl-L-methionine = 2'-O-methyluridine(2552) in 23S rRNA + S-adenosyl-L-homocysteine + H(+). Its function is as follows. Specifically methylates the uridine in position 2552 of 23S rRNA at the 2'-O position of the ribose in the fully assembled 50S ribosomal subunit. The chain is Ribosomal RNA large subunit methyltransferase E from Shewanella woodyi (strain ATCC 51908 / MS32).